A 396-amino-acid polypeptide reads, in one-letter code: General transcription factor IIH subunit 2 (396 aa).

The 177-residue stretch at 60 to 236 (HLYVVVDGSR…HYKELLARHV (177 aa)) folds into the VWFA domain. Y95 is subject to Phosphotyrosine. The C4-type zinc-finger motif lies at 292 to 309 (CPQCRAKYCELPVECKIC).

The protein belongs to the GTF2H2 family. In terms of assembly, component of the TFIID-containing RNA polymerase II pre-initiation complex that is composed of TBP and at least GTF2A1, GTF2A2, GTF2E1, GTF2E2, GTF2F1, GTF2H2, GTF2H3, GTF2H4, GTF2H5, GTF2B, TCEA1, ERCC2 and ERCC3. Component of the 7-subunit TFIIH core complex composed of XPB/ERCC3, XPD/ERCC2, GTF2H1, GTF2H2, GTF2H3, GTF2H4 and GTF2H5, which is active in NER. The core complex associates with the 3-subunit CDK-activating kinase (CAK) module composed of CCNH/cyclin H, CDK7 and MNAT1 to form the 10-subunit holoenzyme (holo-TFIIH) active in transcription. Interacts with XPB, XPD, GTF2H1 and GTF2H3.

The protein resides in the nucleus. Component of the general transcription and DNA repair factor IIH (TFIIH) core complex, which is involved in general and transcription-coupled nucleotide excision repair (NER) of damaged DNA and, when complexed to CAK, in RNA transcription by RNA polymerase II. In NER, TFIIH acts by opening DNA around the lesion to allow the excision of the damaged oligonucleotide and its replacement by a new DNA fragment. In transcription, TFIIH has an essential role in transcription initiation. When the pre-initiation complex (PIC) has been established, TFIIH is required for promoter opening and promoter escape. Phosphorylation of the C-terminal tail (CTD) of the largest subunit of RNA polymerase II by the kinase module CAK controls the initiation of transcription. The N-terminus of GTF2H2 interacts with and regulates XPD whereas an intact C-terminus is required for a successful escape of RNAP II form the promoter. The protein is General transcription factor IIH subunit 2 (Gtf2h2) of Rattus norvegicus (Rat).